The chain runs to 344 residues: L-rhamnose-proton symporter (344 aa).

10 helical membrane-spanning segments follow: residues 4 to 24, 38 to 58, 68 to 88, 101 to 121, 137 to 157, 175 to 195, 214 to 234, 255 to 275, 290 to 310, and 324 to 344; these read PILLGIFWHFIGAASAACFYA, WSLGGFFSWIILPWSISWWLL, FDMATLLPIFLFGAMWGIGNI, MGIGIAIGVTLIIGTLMTPVL, TLLGVLVAVIGVAIVSYAGLL, LILAVMCGIFSAGMSFAMDAA, LPSYVVIMGGGAIVNLGFCFI, LIANALFAILGGVMWYLQFFF, ISWMLHMSFYVLCGGIVGLLF, and LVLGCVVIILAANIVGLGMAV.

Belongs to the L-rhamnose transporter (TC 2.A.7.6) family.

Its subcellular location is the cell inner membrane. It catalyses the reaction L-rhamnopyranose(in) + H(+)(in) = L-rhamnopyranose(out) + H(+)(out). Functionally, uptake of L-rhamnose across the cytoplasmic membrane with the concomitant transport of protons into the cell (symport system). This chain is L-rhamnose-proton symporter, found in Pectobacterium atrosepticum (strain SCRI 1043 / ATCC BAA-672) (Erwinia carotovora subsp. atroseptica).